Consider the following 2214-residue polypeptide: Multifunctional protein URA2 (2214 aa).

Ala-2 is modified (N-acetylalanine). Residues 2 to 400 (ATIAPTAPIT…PGPRDTEFLF (399 aa)) form a GATase (Glutamine amidotransferase) region. Residues Ser-64, Gly-273, and Gly-275 each contribute to the L-glutamine site. Residues 228–413 (RILAIDVGMK…IQAVKEFKYT (186 aa)) form the Glutamine amidotransferase type-1 domain. The Nucleophile; for GATase activity role is filled by Cys-302. The L-glutamine site is built by Leu-303, Gln-306, Asn-344, Gly-346, and Phe-347. Active-site for GATase activity residues include His-386 and Glu-388. Positions 401–440 (DVFIQAVKEFKYTQVLKPIAFPGGLLEDNVKAHPRIEAKK) are linker. A CPSase A region spans residues 440 to 980 (KVLVLGSGGL…DSHDLSFDDH (541 aa)). The CPSase (Carbamoyl phosphate synthase) stretch occupies residues 440–1482 (KVLVLGSGGL…TNVKCAKLLI (1043 aa)). Residues Arg-558, Arg-598, Gly-604, Gly-605, Lys-635, Met-637, Glu-642, Gly-668, Ile-669, His-670, Gln-711, and Glu-725 each contribute to the ATP site. ATP-grasp domains lie at 562–754 (SNAI…KLGL) and 1099–1290 (SRML…KAIM). Residues Gln-711, Glu-725, and Asn-727 each contribute to the Mg(2+) site. The Mn(2+) site is built by Gln-711, Glu-725, and Asn-727. The CPSase B stretch occupies residues 981–1482 (GVMVLGSGVY…TNVKCAKLLI (502 aa)). Residues Arg-1135, Lys-1174, Ile-1176, Glu-1181, Gly-1206, Val-1207, His-1208, Ser-1209, Gln-1249, and Glu-1261 each coordinate ATP. The Mg(2+) site is built by Gln-1249, Glu-1261, and Asn-1263. Mn(2+)-binding residues include Gln-1249, Glu-1261, and Asn-1263. Residues 1356–1508 (FKLPKKNILL…QTSHRTITLP (153 aa)) enclose the MGS-like domain. Positions 1483–1492 (EAISRNITLD) are linker. Positions 1493-1821 (VSERDAQTSH…YNGETLVLSG (329 aa)) are defective DHOase domain. The interval 1822 to 1909 (ELVSPGAKGK…NLIRSNNPFR (88 aa)) is linker. A Glycyl lysine isopeptide (Lys-Gly) (interchain with G-Cter in ubiquitin) cross-link involves residue Lys-1853. At Ser-1857 the chain carries Phosphoserine; by PKA. Residues 1910–2214 (GRHILSIKQF…LLAMVMGVDM (305 aa)) are ATCase (Aspartate transcarbamylase). Carbamoyl phosphate-binding residues include Arg-1962 and Thr-1963. Lys-1990 provides a ligand contact to L-aspartate. Residues Arg-2011, His-2039, and Gln-2042 each coordinate carbamoyl phosphate. Positions 2072 and 2134 each coordinate L-aspartate. Carbamoyl phosphate contacts are provided by Leu-2173 and Pro-2174.

In the N-terminal section; belongs to the CarA family. This sequence in the 2nd section; belongs to the CarB family. The protein in the 3rd section; belongs to the metallo-dependent hydrolases superfamily. DHOase family. CAD subfamily. It in the C-terminal section; belongs to the aspartate/ornithine carbamoyltransferase superfamily. ATCase family. Mg(2+) is required as a cofactor. The cofactor is Mn(2+).

Its subcellular location is the cytoplasm. The catalysed reaction is hydrogencarbonate + L-glutamine + 2 ATP + H2O = carbamoyl phosphate + L-glutamate + 2 ADP + phosphate + 2 H(+). It carries out the reaction L-glutamine + H2O = L-glutamate + NH4(+). The enzyme catalyses hydrogencarbonate + NH4(+) + 2 ATP = carbamoyl phosphate + 2 ADP + phosphate + 2 H(+). It catalyses the reaction carbamoyl phosphate + L-aspartate = N-carbamoyl-L-aspartate + phosphate + H(+). The protein operates within pyrimidine metabolism; UMP biosynthesis via de novo pathway; (S)-dihydroorotate from bicarbonate: step 1/3. It participates in pyrimidine metabolism; UMP biosynthesis via de novo pathway; (S)-dihydroorotate from bicarbonate: step 2/3. With respect to regulation, both CPSase and ATCase activities are feedback inhibited by the end product UTP. Functionally, multifunctional protein that encodes the first 2 enzymatic activities of the de novo pyrimidine pathway: carbamoylphosphate synthetase (CPSase; EC 6.3.5.5) and aspartate transcarbamylase (ATCase; EC 2.1.3.2). The CPSase-function is accomplished in 2 steps, by a glutamine-dependent amidotransferase activity (GATase) that binds and cleaves glutamine to produce ammonia, followed by an ammonium-dependent carbamoyl phosphate synthetase, which reacts with the ammonia, hydrogencarbonate and ATP to form carbamoyl phosphate. The endogenously produced carbamoyl phosphate is sequestered and channeled to the ATCase active site. ATCase then catalyzes the formation of carbamoyl-L-aspartate from L-aspartate and carbamoyl phosphate. The sequence is that of Multifunctional protein URA2 (URA2) from Saccharomyces cerevisiae (strain ATCC 204508 / S288c) (Baker's yeast).